The primary structure comprises 569 residues: 63 kDa chaperonin, mitochondrial (569 aa).

Residues 1 to 29 (MFKMYRSPHITRNSFKYLKATNINSCRFY) constitute a mitochondrion transit peptide.

The protein belongs to the chaperonin (HSP60) family. As to quaternary structure, forms a single seven-member ring complex, in tight association with the p60 protein. Testis.

It localises to the mitochondrion. In terms of biological role, implicated in mitochondrial protein import and macromolecular assembly. May facilitate the correct folding of imported proteins. May also prevent misfolding and promote the refolding and proper assembly of unfolded polypeptides generated under stress conditions in the mitochondrial matrix. The sequence is that of 63 kDa chaperonin, mitochondrial from Heliothis virescens (Tobacco budworm moth).